Reading from the N-terminus, the 758-residue chain is MGSFLRSFRRDVGSSTPSVGATPAKKEPLALPITPLEKMLQEMGSDSVRQDGSDKFFGMENYGNTCYCNSILQCLYYSVPFREAVLNYPTRTPIESLEAALAKNLRYQNFAANQEAEAQAEKQRLANAQRPGAPPAQPPKPEDKDSSEYKKKIALQSLPLLETKNNAGSYGMSESLFTSLKDIFESVVASQSRIGIVRPQHFLDVLRRENEMFRSAMHQDAHEFLNLVLNEVVANVEAEAMKQPIPSLPPADTTDSSRQSISSGSKTPNTTRWVHELFEGTLTSETQCLTCENVSQRDEIFLDLSVDLEQHSSVTSCLRKFSAEEMLCERNKFHCDNCGGLQEAEKRMKIKRLPRILALHLKRFKYTEDLQRLQKLFHRVVYPYHLRLFNTTDDAEDPDRLYELYAVVVHIGGGPYHGHYVSIIKTQDRGWLLFDDEMVEPVDKNYVRNFFGDKPGLACAYVLFYQETTLEAVLKEQEMENMNASAADANEAAVKPNGFPQPAGLAHVHSASQIPVQDEPQRHTGLRRAPTAPQLPTHTEYPGPDIEPSSPAVATPPPVPPIPETANRPLSPKKSDIQSKKERAKEEKERKAAEKEMEKQRRKEQEARVKENQRREEAELKAALEASKASKADEDRRNPTENGKDGDPKRSSNGLSRLKRGSKSFSQRLGKDKESRASSSGLPSVPSAEPLTPNPVPLEPVQQLSPRKASPPKESHVVHKPLGQDDEPDALKSPKGDRAGHGKWRSFSIRKKSFSILS.

The interval 1–27 is disordered; sequence MGSFLRSFRRDVGSSTPSVGATPAKKE. A USP domain is found at 57-468; sequence FGMENYGNTC…CAYVLFYQET (412 aa). Catalysis depends on C66, which acts as the Nucleophile. Disordered regions lie at residues 116 to 148 and 243 to 268; these read AEAQ…DSSE and QPIP…SKTP. The span at 253–268 shows a compositional bias: polar residues; that stretch reads TTDSSRQSISSGSKTP. The Proton acceptor role is filled by H419. The disordered stretch occupies residues 514–744; that stretch reads IPVQDEPQRH…KGDRAGHGKW (231 aa). The segment covering 554–563 has biased composition (pro residues); it reads ATPPPVPPIP. Residues 573–631 adopt a coiled-coil conformation; sequence KKSDIQSKKERAKEEKERKAAEKEMEKQRRKEQEARVKENQRREEAELKAALEASKASK. 2 stretches are compositionally biased toward basic and acidic residues: residues 573 to 650 and 729 to 740; these read KKSD…DPKR and DALKSPKGDRAG.

This sequence belongs to the peptidase C19 family. As to quaternary structure, interacts with creA, creC and qutD.

It catalyses the reaction Thiol-dependent hydrolysis of ester, thioester, amide, peptide and isopeptide bonds formed by the C-terminal Gly of ubiquitin (a 76-residue protein attached to proteins as an intracellular targeting signal).. Its function is as follows. Ubiquitin thioesterase component of the regulatory network controlling carbon source utilization through ubiquitination and deubiquitination involving creA, creB, creC, creD and acrB. Deubiquitinates the creA catabolic repressor and the quinate permease qutD. Also plays a role in response to carbon starvation and the control of extracellular proteases activity. This chain is Probable ubiquitin carboxyl-terminal hydrolase creB (creB), found in Aspergillus niger (strain ATCC MYA-4892 / CBS 513.88 / FGSC A1513).